Consider the following 548-residue polypeptide: ATP synthase subunit alpha (548 aa).

Residue 172–179 (GDRKTGKT) participates in ATP binding. Residues 510–548 (QFTTSSGESAAPSEPEAEALAADEVGQETVKVNRPAPKK) form a disordered region. A compositionally biased stretch (low complexity) spans 514–531 (SSGESAAPSEPEAEALAA).

The protein belongs to the ATPase alpha/beta chains family. In terms of assembly, F-type ATPases have 2 components, CF(1) - the catalytic core - and CF(0) - the membrane proton channel. CF(1) has five subunits: alpha(3), beta(3), gamma(1), delta(1), epsilon(1). CF(0) has three main subunits: a(1), b(2) and c(9-12). The alpha and beta chains form an alternating ring which encloses part of the gamma chain. CF(1) is attached to CF(0) by a central stalk formed by the gamma and epsilon chains, while a peripheral stalk is formed by the delta and b chains.

It is found in the cell membrane. The enzyme catalyses ATP + H2O + 4 H(+)(in) = ADP + phosphate + 5 H(+)(out). Produces ATP from ADP in the presence of a proton gradient across the membrane. The alpha chain is a regulatory subunit. This chain is ATP synthase subunit alpha, found in Saccharopolyspora erythraea (strain ATCC 11635 / DSM 40517 / JCM 4748 / NBRC 13426 / NCIMB 8594 / NRRL 2338).